A 324-amino-acid polypeptide reads, in one-letter code: tRNA dimethylallyltransferase (324 aa).

Position 17 to 24 (17 to 24) interacts with ATP; it reads GPTASGKT. A substrate-binding site is contributed by 19 to 24; it reads TASGKT. 3 interaction with substrate tRNA regions span residues 42 to 45, 166 to 170, and 251 to 256; these read DSAL, QRIQR, and RCVGYR.

Belongs to the IPP transferase family. As to quaternary structure, monomer. Mg(2+) serves as cofactor.

The catalysed reaction is adenosine(37) in tRNA + dimethylallyl diphosphate = N(6)-dimethylallyladenosine(37) in tRNA + diphosphate. In terms of biological role, catalyzes the transfer of a dimethylallyl group onto the adenine at position 37 in tRNAs that read codons beginning with uridine, leading to the formation of N6-(dimethylallyl)adenosine (i(6)A). The sequence is that of tRNA dimethylallyltransferase from Burkholderia mallei (strain NCTC 10247).